Consider the following 549-residue polypeptide: Teichoic acids export ATP-binding protein TagH (549 aa).

Residues aspartate 22–glutamine 243 enclose the ABC transporter domain. Glycine 57–serine 64 serves as a coordination point for ATP. The tract at residues methionine 244–lysine 549 is unknown. In terms of domain architecture, SH3b spans glutamate 346–lysine 415.

It belongs to the ABC transporter superfamily. Teichoic acids exporter (TC 3.A.1.104.1) family. The complex is composed of two ATP-binding proteins (TagH) and two transmembrane proteins (TagG).

It is found in the cell membrane. The enzyme catalyses ATP + H2O + teichoic acidSide 1 = ADP + phosphate + teichoic acidSide 2.. Part of the ABC transporter complex TagGH involved in teichoic acids export. Responsible for energy coupling to the transport system. The sequence is that of Teichoic acids export ATP-binding protein TagH from Bacillus cereus (strain ZK / E33L).